The sequence spans 323 residues: HPr kinase/phosphorylase (323 aa).

Catalysis depends on residues histidine 146 and lysine 167. 161–168 (GESGLGKS) lines the ATP pocket. Serine 168 lines the Mg(2+) pocket. Aspartate 185 functions as the Proton acceptor; for phosphorylation activity. Proton donor; for dephosphorylation activity in the catalytic mechanism. The interval 209–218 (LEVRGLGLLD) is important for the catalytic mechanism of both phosphorylation and dephosphorylation. Glutamate 210 lines the Mg(2+) pocket. Arginine 250 is an active-site residue. An important for the catalytic mechanism of dephosphorylation region spans residues 271 to 276 (QVAAGR).

Belongs to the HPrK/P family. As to quaternary structure, homohexamer. It depends on Mg(2+) as a cofactor.

It carries out the reaction [HPr protein]-L-serine + ATP = [HPr protein]-O-phospho-L-serine + ADP + H(+). The catalysed reaction is [HPr protein]-O-phospho-L-serine + phosphate + H(+) = [HPr protein]-L-serine + diphosphate. In terms of biological role, catalyzes the ATP- as well as the pyrophosphate-dependent phosphorylation of a specific serine residue in HPr, a phosphocarrier protein of the phosphoenolpyruvate-dependent sugar phosphotransferase system (PTS). HprK/P also catalyzes the pyrophosphate-producing, inorganic phosphate-dependent dephosphorylation (phosphorolysis) of seryl-phosphorylated HPr (P-Ser-HPr). The chain is HPr kinase/phosphorylase from Cupriavidus necator (strain ATCC 17699 / DSM 428 / KCTC 22496 / NCIMB 10442 / H16 / Stanier 337) (Ralstonia eutropha).